The chain runs to 419 residues: Pyrrolysine--tRNA ligase (419 aa).

Positions 100 to 157 (APKVKKAMPKSVSRAPKPLENSVSAKASTNTSRSVPSPAKSTPNSSVPASAPAPSLTR) are disordered. Residues 120–141 (NSVSAKASTNTSRSVPSPAKST) are compositionally biased toward polar residues. Residues 142–154 (PNSSVPASAPAPS) are compositionally biased toward low complexity.

The protein belongs to the class-II aminoacyl-tRNA synthetase family.

The protein localises to the cytoplasm. It carries out the reaction tRNA(Pyl) + L-pyrrolysine + ATP = L-pyrrolysyl-tRNA(Pyl) + AMP + diphosphate. Catalyzes the attachment of pyrrolysine to tRNA(Pyl). Pyrrolysine is a lysine derivative encoded by the termination codon UAG. This chain is Pyrrolysine--tRNA ligase (pylS), found in Methanosarcina barkeri.